The sequence spans 653 residues: E3 ubiquitin-protein ligase TRIM32 (653 aa).

Position 2 is an N-acetylalanine (Ala-2). An RING-type zinc finger spans residues Cys-20–Ser-65. Ser-55 carries the phosphoserine; by CHEK2 modification. The Zn(2+) site is built by Cys-100, Cys-103, Cys-123, and His-128. Residues Cys-103–His-133 form a B box-type zinc finger. A coiled-coil region spans residues Val-138–Asp-197. 3 positions are modified to phosphoserine: Ser-328, Ser-335, and Ser-339. NHL repeat units lie at residues Leu-358 to Lys-401, Asp-415 to Asp-458, Gly-459 to Asp-499, Gly-562 to Gly-605, and Gly-606 to His-646.

It belongs to the TRIM/RBCC family. It self-associates. Interacts with DTNBP1. Interacts with PIAS4/PIASY upon treatment with UVB and TNF-alpha. Interacts with AMBRA1; promoting activation of ULK1 through unanchored 'Lys-63'-linked polyubiquitin chains. Interacts with TICAM1 and TAX1BP1; these interactions target TICAM1 to TAX1BP1-mediated selective autophagic degradation. As to quaternary structure, (Microbial infection) Interacts with S.typhimurium protein SseK3; SseK3 does not glycosylate TRIM32. Ubiquitinated. Post-translationally, phosphorylation at Ser-55 by CHEK2 under oxidative stress, activates the E3 ligase activity and promotes ATG7 ubiquitination leading to positive regulation of the autophagosme assembly. Spleen, thymus, prostate, testis, ovary, intestine, colon and skeletal muscle.

It is found in the cytoplasm. Its subcellular location is the mitochondrion. The protein localises to the endoplasmic reticulum. The catalysed reaction is S-ubiquitinyl-[E2 ubiquitin-conjugating enzyme]-L-cysteine + [acceptor protein]-L-lysine = [E2 ubiquitin-conjugating enzyme]-L-cysteine + N(6)-ubiquitinyl-[acceptor protein]-L-lysine.. It participates in protein modification; protein ubiquitination. Functionally, E3 ubiquitin ligase that plays a role in various biological processes including neural stem cell differentiation, innate immunity, inflammatory resonse and autophagy. Plays a role in virus-triggered induction of IFN-beta and TNF-alpha by mediating the ubiquitination of STING1. Mechanistically, targets STING1 for 'Lys-63'-linked ubiquitination which promotes the interaction of STING1 with TBK1. Regulates bacterial clearance and promotes autophagy in Mycobacterium tuberculosis-infected macrophages. Negatively regulates TLR3/4-mediated innate immune and inflammatory response by triggering the autophagic degradation of TICAM1 in an E3 activity-independent manner. Plays an essential role in oxidative stress induced cell death by inducing loss of transmembrane potential and enhancing mitochondrial reactive oxygen species (ROS) production during oxidative stress conditions. Ubiquitinates XIAP and targets it for proteasomal degradation. Ubiquitinates DTNBP1 (dysbindin) and promotes its degradation. May ubiquitinate BBS2. Ubiquitinates PIAS4/PIASY and promotes its degradation in keratinocytes treated with UVB and TNF-alpha. Also acts as a regulator of autophagy by mediating formation of unanchored 'Lys-63'-linked polyubiquitin chains that activate ULK1: interaction with AMBRA1 is required for ULK1 activation. Positively regulates dendritic branching by promoting ubiquitination and subsequent degradation of the epigenetic factor CDYL. Under metabolic stress and phosphorylation by CHK2, mediates 'Lys-63'-linked ubiquitination of ATG7 at 'Lys-45' to initiate autophagy. In terms of biological role, (Microbial infection) May play a significant role in mediating the biological activity of the HIV-1 Tat protein in vivo. Binds specifically to the activation domain of HIV-1 Tat and can also interact with the HIV-2 and EIAV Tat proteins in vivo. The sequence is that of E3 ubiquitin-protein ligase TRIM32 from Homo sapiens (Human).